The following is a 216-amino-acid chain: uncharacterized protein (216 aa).

This is an uncharacterized protein from Treponema pallidum (strain Nichols).